We begin with the raw amino-acid sequence, 259 residues long: Type III pantothenate kinase (259 aa).

6 to 13 (DCGNTNTL) provides a ligand contact to ATP. A substrate-binding site is contributed by 108-111 (GADR). The active-site Proton acceptor is the Asp110. Asp130 is a K(+) binding site. Thr133 serves as a coordination point for ATP. Thr185 serves as a coordination point for substrate.

This sequence belongs to the type III pantothenate kinase family. Homodimer. NH4(+) serves as cofactor. K(+) is required as a cofactor.

The protein localises to the cytoplasm. It carries out the reaction (R)-pantothenate + ATP = (R)-4'-phosphopantothenate + ADP + H(+). The protein operates within cofactor biosynthesis; coenzyme A biosynthesis; CoA from (R)-pantothenate: step 1/5. In terms of biological role, catalyzes the phosphorylation of pantothenate (Pan), the first step in CoA biosynthesis. This chain is Type III pantothenate kinase, found in Maricaulis maris (strain MCS10) (Caulobacter maris).